Consider the following 137-residue polypeptide: MKTPPNQEKNNEKISLLFSSQRLTIDVHPSSVYHIVLSSNNADRHQVTLSFTARSRMMPLTRARPFGNHSSMFRMFLDAMVILAVASGVSLPPQLPGRRSHNASTPGAKKPGKDHGAMVSEFPANGVITPVYFPLRW.

The chain crosses the membrane as a helical span at residues 75 to 91 (MFLDAMVILAVASGVSL). The tract at residues 93-116 (PQLPGRRSHNASTPGAKKPGKDHG) is disordered.

Its subcellular location is the membrane. This is an uncharacterized protein from Saccharomyces cerevisiae (strain ATCC 204508 / S288c) (Baker's yeast).